We begin with the raw amino-acid sequence, 1127 residues long: Cellulose synthase-like protein D1 (1127 aa).

Residues 1–24 (MASKGILKNGGKPPTAPSSAAPTV) form a disordered region. 2 consecutive transmembrane segments (helical) span residues 262 to 282 (VISPYRLLVLIRLVALGLFLM) and 292 to 312 (AIWLWGMSIVCELWFALSWVL). Catalysis depends on residues aspartate 392 and aspartate 828. Transmembrane regions (helical) follow at residues 910–930 (VFLIVYCFLPALSLFSGQFIV), 936–956 (TFLTYLLIITITLCLLAMLEI), 982–1002 (LAAVLQGLLKVIAGIEISFTL), 1025–1045 (SLMIPPLTIIMINLVAIAVGF), 1059–1079 (LLGGVFFSFWVLAHLYPFAKG), and 1089–1109 (TIVYVWSGLVAITISLLWIAI).

This sequence belongs to the glycosyltransferase 2 family. Plant cellulose synthase-like D subfamily.

The protein resides in the golgi apparatus membrane. In terms of biological role, thought to be a Golgi-localized beta-glycan synthase that polymerize the backbones of noncellulosic polysaccharides (hemicelluloses) of plant cell wall. The polypeptide is Cellulose synthase-like protein D1 (CSLD1) (Oryza sativa subsp. indica (Rice)).